Here is a 588-residue protein sequence, read N- to C-terminus: Aspartate--tRNA ligase (588 aa).

Position 174 (E174) interacts with L-aspartate. Residues 198–201 (QLFK) form an aspartate region. R220 is a binding site for L-aspartate. ATP is bound by residues 220 to 222 (RDE) and Q229. H448 is an L-aspartate binding site. E482 serves as a coordination point for ATP. R489 provides a ligand contact to L-aspartate. 534–537 (GIDR) lines the ATP pocket.

This sequence belongs to the class-II aminoacyl-tRNA synthetase family. Type 1 subfamily. In terms of assembly, homodimer.

Its subcellular location is the cytoplasm. The catalysed reaction is tRNA(Asp) + L-aspartate + ATP = L-aspartyl-tRNA(Asp) + AMP + diphosphate. Catalyzes the attachment of L-aspartate to tRNA(Asp) in a two-step reaction: L-aspartate is first activated by ATP to form Asp-AMP and then transferred to the acceptor end of tRNA(Asp). The polypeptide is Aspartate--tRNA ligase (Xanthomonas euvesicatoria pv. vesicatoria (strain 85-10) (Xanthomonas campestris pv. vesicatoria)).